A 330-amino-acid polypeptide reads, in one-letter code: DNA-directed RNA polymerase subunit alpha (330 aa).

The interval methionine 1–arginine 236 is alpha N-terminal domain (alpha-NTD). The tract at residues phenylalanine 250–asparagine 330 is alpha C-terminal domain (alpha-CTD).

It belongs to the RNA polymerase alpha chain family. Homodimer. The RNAP catalytic core consists of 2 alpha, 1 beta, 1 beta' and 1 omega subunit. When a sigma factor is associated with the core the holoenzyme is formed, which can initiate transcription.

It carries out the reaction RNA(n) + a ribonucleoside 5'-triphosphate = RNA(n+1) + diphosphate. Functionally, DNA-dependent RNA polymerase catalyzes the transcription of DNA into RNA using the four ribonucleoside triphosphates as substrates. This chain is DNA-directed RNA polymerase subunit alpha, found in Blochmanniella pennsylvanica (strain BPEN).